Reading from the N-terminus, the 153-residue chain is D-aminoacyl-tRNA deacylase (153 aa).

The short motif at 140–141 (GP) is the Gly-cisPro motif, important for rejection of L-amino acids element.

Belongs to the DTD family. In terms of assembly, homodimer.

It is found in the cytoplasm. The catalysed reaction is glycyl-tRNA(Ala) + H2O = tRNA(Ala) + glycine + H(+). It carries out the reaction a D-aminoacyl-tRNA + H2O = a tRNA + a D-alpha-amino acid + H(+). Functionally, an aminoacyl-tRNA editing enzyme that deacylates mischarged D-aminoacyl-tRNAs. Also deacylates mischarged glycyl-tRNA(Ala), protecting cells against glycine mischarging by AlaRS. Acts via tRNA-based rather than protein-based catalysis; rejects L-amino acids rather than detecting D-amino acids in the active site. By recycling D-aminoacyl-tRNA to D-amino acids and free tRNA molecules, this enzyme counteracts the toxicity associated with the formation of D-aminoacyl-tRNA entities in vivo and helps enforce protein L-homochirality. This chain is D-aminoacyl-tRNA deacylase, found in Trichodesmium erythraeum (strain IMS101).